We begin with the raw amino-acid sequence, 360 residues long: A-type ATP synthase subunit C (360 aa).

Residues 1-25 are disordered; sequence MRLLEKLWGQKPSRKSDKKKNGTSN.

This sequence belongs to the V-ATPase V0D/AC39 subunit family. In terms of assembly, has multiple subunits with at least A(3), B(3), C, D, E, F, H, I and proteolipid K(x).

It localises to the cell membrane. Functionally, component of the A-type ATP synthase that produces ATP from ADP in the presence of a proton gradient across the membrane. The protein is A-type ATP synthase subunit C of Methanosarcina barkeri (strain Fusaro / DSM 804).